Here is a 74-residue protein sequence, read N- to C-terminus: Mitochondrial import receptor subunit TOM6 homolog (74 aa).

Positions 1–14 (MASSGAGVTAAGSA) are enriched in low complexity. The disordered stretch occupies residues 1–24 (MASSGAGVTAAGSANEAPEIPDNV). A2 carries the N-acetylalanine modification.

It belongs to the Tom6 family. As to quaternary structure, forms part of the preprotein translocase complex of the outer mitochondrial membrane (TOM complex) which consists of at least 7 different proteins (TOMM5, TOMM6, TOMM7, TOMM20, TOMM22, TOMM40 and TOMM70).

The protein resides in the mitochondrion outer membrane. The sequence is that of Mitochondrial import receptor subunit TOM6 homolog (TOMM6) from Bos taurus (Bovine).